Consider the following 189-residue polypeptide: Ion-translocating oxidoreductase complex subunit B (189 aa).

The segment at 1–26 (MSAVMIAVVLLGLLALVFGAILGFAA) is hydrophobic. The 4Fe-4S domain occupies 32–90 (EGDPLVDQVESLLPQTQCGQCGYPGCRPYAEAIAGGDQINKCPPGGTATMEKIAELMGV). Residues cysteine 49, cysteine 52, cysteine 57, cysteine 73, cysteine 114, cysteine 117, cysteine 120, cysteine 124, cysteine 144, cysteine 147, cysteine 150, and cysteine 154 each coordinate [4Fe-4S] cluster. 4Fe-4S ferredoxin-type domains follow at residues 105-134 (KVAY…GAGK) and 136-164 (MHTV…MLPV).

It belongs to the 4Fe4S bacterial-type ferredoxin family. RnfB subfamily. In terms of assembly, the complex is composed of six subunits: RnfA, RnfB, RnfC, RnfD, RnfE and RnfG. The cofactor is [4Fe-4S] cluster.

It is found in the cell inner membrane. Part of a membrane-bound complex that couples electron transfer with translocation of ions across the membrane. The chain is Ion-translocating oxidoreductase complex subunit B from Shewanella amazonensis (strain ATCC BAA-1098 / SB2B).